We begin with the raw amino-acid sequence, 185 residues long: N-alpha-acetyltransferase 30 (185 aa).

The N-acetyltransferase domain occupies 31–179 (IEYIPYQGES…DAVRLLLPLN (149 aa)).

This sequence belongs to the acetyltransferase family. MAK3 subfamily.

In terms of biological role, probable catalytic component of a complex displaying alpha (N-terminal) acetyltransferase activity. The protein is N-alpha-acetyltransferase 30 of Dictyostelium discoideum (Social amoeba).